Here is a 471-residue protein sequence, read N- to C-terminus: MSAPFIFKRFSSTIPIHSKPTPSKAHLHFPLPSSSFPKGYVLTGIHAGVKKVAGVPDLAVILSTSSQPTSAAACFTRNAFKAAPVIVSNEILKKNGGYARGVVVNSGCANAVTGKQGMEDAWAMVRETDALLPSKKFEHETLVMSTGVIGQNLPISKIVEGIRSQAESSSTRSLASDFSAWERAAKAFMTTDTFPKLRSRTFTIDGVEYKLAGMDKGAGMIHPDMGPAGTEFKKQLHATLLGCILTDAAVSPRSLQSALTYAVDRSFNSISVDGDMSTNDSIYVLANGAASSSIIDEDATPQAYEAFKQELTTFAADLAKLVVRDGEGATKFVTVTVKGAPSYKDAHSIASRISTSALVKTALYGEDANWGRILAATGSVPLSPTNANTPPPVIDTTKVCVTIVPADGTAPLPVLVNGEPENVDEDRAKEIMTQEDFELLVDLGGMGDGEAQYWTCDFSYEYVRINGDYRS.

Residues Thr190, Lys216, Thr239, Glu327, Asn466, and Ser471 each contribute to the substrate site. Thr239 serves as the catalytic Nucleophile.

Belongs to the ArgJ family. Heterodimer of an alpha and a beta chain. The alpha and beta chains are autoproteolytically processed from a single precursor protein within the mitochondrion.

It localises to the mitochondrion matrix. The enzyme catalyses N(2)-acetyl-L-ornithine + L-glutamate = N-acetyl-L-glutamate + L-ornithine. It catalyses the reaction L-glutamate + acetyl-CoA = N-acetyl-L-glutamate + CoA + H(+). The protein operates within amino-acid biosynthesis; L-arginine biosynthesis; L-ornithine and N-acetyl-L-glutamate from L-glutamate and N(2)-acetyl-L-ornithine (cyclic): step 1/1. It participates in amino-acid biosynthesis; L-arginine biosynthesis; N(2)-acetyl-L-ornithine from L-glutamate: step 1/4. Catalyzes two activities which are involved in the cyclic version of arginine biosynthesis: the synthesis of acetylglutamate from glutamate and acetyl-CoA, and of ornithine by transacetylation between acetylornithine and glutamate. In Coprinopsis cinerea (strain Okayama-7 / 130 / ATCC MYA-4618 / FGSC 9003) (Inky cap fungus), this protein is Arginine biosynthesis bifunctional protein ArgJ, mitochondrial.